A 1259-amino-acid chain; its full sequence is Ankyrin repeat and sterile alpha motif domain-containing protein 1B (1259 aa).

ANK repeat units lie at residues 2–31 (GKDQELLEAARTGNVALVEKLLSGRKGGIL), 58–87 (SGYTALHHAALNGHKDIVLKLLQYEASTNV), 91–120 (KGYFPIHLAAWKGDVEIVKILIHHGPSHSR), 127–156 (ENETALHCAAQYGHSEVVAVLLEELTDPTI), 160–189 (KLETPLDLAALYGRLRVVKMIISAHPNLMS), 193–222 (RKHTPLHLAARNGHKAVVQVLLEAGMDVSC), and 225–254 (EKGSALHEAALFGKVDVVRVLLETGIDANI). The tract at residues 298–325 (HAQEDTAQETHLSSPAESPQKTKSETVT) is disordered. Polar residues predominate over residues 306 to 325 (ETHLSSPAESPQKTKSETVT). Phosphoserine is present on residues Ser-310, Ser-311, Ser-315, Ser-353, and Ser-364. Disordered regions lie at residues 367-401 (ELGKNGSQSVRTSSTINLSPGEVEDEEEDPNSCGP), 490-513 (PGTSHHRNSSTGPTPDCSPPSPDT), 556-614 (CTSF…GSSP), and 631-661 (TCEDGPDEASLANSPLPFKQTPIENNPEPSV). Residues 371–384 (NGSQSVRTSSTINL) are compositionally biased toward polar residues. Position 503 is a phosphothreonine (Thr-503). Ser-507 and Ser-510 each carry phosphoserine. The segment covering 556–574 (CTSFTSSPAASPPTSSVET) has biased composition (low complexity). The segment covering 575–587 (TEVKNEGAEHADD) has biased composition (basic and acidic residues). Ser-738 is modified (phosphoserine). Residues 753 to 776 (VNWSKSSTAERSSKDNSERTPSFT) are disordered. Thr-772 is modified (phosphothreonine). Ser-774 carries the phosphoserine modification. SAM domains lie at 809–875 (CPVQ…LPKM) and 883–948 (YHPT…RLHD). The residue at position 900 (Tyr-900) is a Phosphotyrosine. A short sequence motif (nuclear localization signal) is located at residue His-934. The segment at 943–988 (GDRLHDDPPQKPPRSITLREPSGNHTPPQLSPSLSQSTYTTGGSLD) is disordered. Residues 968–983 (TPPQLSPSLSQSTYTT) are compositionally biased toward low complexity. Ser-973 is modified (phosphoserine). Position 1006 is a phosphotyrosine (Tyr-1006). The PID domain maps to 1055 to 1212 (IFQSCDYKAF…SFENKPSKPI (158 aa)). A disordered region spans residues 1196-1216 (HSSTLPESFENKPSKPIPKPR).

Interacts with EPHA8. Isoform 2 interacts with COIL.

The protein localises to the cytoplasm. It is found in the nucleus. Its subcellular location is the postsynaptic density. The protein resides in the cell projection. It localises to the dendritic spine. Isoform 2 may participate in the regulation of nucleoplasmic coilin protein interactions in neuronal and transformed cells. The chain is Ankyrin repeat and sterile alpha motif domain-containing protein 1B (Anks1b) from Mus musculus (Mouse).